Reading from the N-terminus, the 111-residue chain is Nucleoid-associated protein NMC1380 (111 aa).

It belongs to the YbaB/EbfC family. Homodimer.

Its subcellular location is the cytoplasm. The protein localises to the nucleoid. Its function is as follows. Binds to DNA and alters its conformation. May be involved in regulation of gene expression, nucleoid organization and DNA protection. The protein is Nucleoid-associated protein NMC1380 of Neisseria meningitidis serogroup C / serotype 2a (strain ATCC 700532 / DSM 15464 / FAM18).